We begin with the raw amino-acid sequence, 194 residues long: Fe/S biogenesis protein NfuA (194 aa).

Residues Cys-151 and Cys-154 each coordinate [4Fe-4S] cluster.

This sequence belongs to the NfuA family. As to quaternary structure, homodimer. Requires [4Fe-4S] cluster as cofactor.

In terms of biological role, involved in iron-sulfur cluster biogenesis. Binds a 4Fe-4S cluster, can transfer this cluster to apoproteins, and thereby intervenes in the maturation of Fe/S proteins. Could also act as a scaffold/chaperone for damaged Fe/S proteins. The protein is Fe/S biogenesis protein NfuA of Pasteurella multocida (strain Pm70).